Reading from the N-terminus, the 177-residue chain is B9 domain-containing protein 2 (177 aa).

In terms of domain architecture, C2 B9-type spans 2–118 (AEVHIIGQIL…EIGTWKVAPN (117 aa)).

Belongs to the B9D family. In terms of assembly, probable component of the tectonic-like complex (also named MKS complex), composed of B9d1, B9d2, Cc2d2a, Mks1 and tctn. Expressed in chordotonal neurons in the antennae (at protein level). Expressed in spermatids (at protein level).

The protein localises to the cytoplasm. The protein resides in the cytoskeleton. It is found in the cilium basal body. In terms of biological role, probable component of the tectonic-like complex (also named MKS complex), a complex localized at the transition zone of primary cilia. Has a role in ciliary structure and function. The protein is B9 domain-containing protein 2 of Drosophila melanogaster (Fruit fly).